Reading from the N-terminus, the 184-residue chain is Adenine phosphoribosyltransferase (184 aa).

It belongs to the purine/pyrimidine phosphoribosyltransferase family. As to quaternary structure, homodimer.

It localises to the cytoplasm. It carries out the reaction AMP + diphosphate = 5-phospho-alpha-D-ribose 1-diphosphate + adenine. The protein operates within purine metabolism; AMP biosynthesis via salvage pathway; AMP from adenine: step 1/1. Catalyzes a salvage reaction resulting in the formation of AMP, that is energically less costly than de novo synthesis. The polypeptide is Adenine phosphoribosyltransferase (Shewanella putrefaciens (strain CN-32 / ATCC BAA-453)).